A 528-amino-acid polypeptide reads, in one-letter code: GMP synthase [glutamine-hydrolyzing] (528 aa).

Positions Ala-13 to Asp-204 constitute a Glutamine amidotransferase type-1 domain. Cys-90 serves as the catalytic Nucleophile. Residues His-178 and Glu-180 contribute to the active site. Positions Trp-205–Arg-403 constitute a GMPS ATP-PPase domain. Ser-232–Ser-238 is an ATP binding site.

Homodimer.

The enzyme catalyses XMP + L-glutamine + ATP + H2O = GMP + L-glutamate + AMP + diphosphate + 2 H(+). It participates in purine metabolism; GMP biosynthesis; GMP from XMP (L-Gln route): step 1/1. Catalyzes the synthesis of GMP from XMP. The chain is GMP synthase [glutamine-hydrolyzing] from Prochlorococcus marinus (strain MIT 9303).